A 37-amino-acid polypeptide reads, in one-letter code: Large ribosomal subunit protein bL36 (37 aa).

The protein belongs to the bacterial ribosomal protein bL36 family.

The polypeptide is Large ribosomal subunit protein bL36 (Prochlorococcus marinus (strain MIT 9313)).